A 305-amino-acid chain; its full sequence is MSNNNTQKPLPFGYQFIAGAVAGVSEILVMYPLDVVKTRVQLQKGTAVAGEEYYNGMFDCLRKIVKNEGFSRLYRGISAPILMEAPKRATKFAANDSWGAFYRNLFGAEKQTQSLAILTGATAGATESFVVVPFELVKIRLQDRASAGKYNGMLDVVKKIVAAEGPLAMYNGLESTLWRHILWNSGYFGCIFQVRAQLPAAEPGNKSQQTRNDLIAGTIGGTAGTILNTPMDVVKSRIQNTSKVPGQVPKYNWAWPAVGTVMKEEGFAALYKGFLPKVLRLGPGGGILLVVFTGVMDFFRNMRGE.

3 Solcar repeats span residues 10–101, 111–197, and 211–298; these read LPFG…WGAF, QTQS…VRAQ, and RNDL…VMDF. A run of 6 helical transmembrane segments spans residues 16 to 36, 78 to 98, 118 to 137, 176 to 196, 208 to 228, and 270 to 291; these read FIAG…LDVV, SAPI…NDSW, LTGA…FELV, TLWR…QVRA, QQTR…TILN, and LYKG…LLVV.

Belongs to the mitochondrial carrier (TC 2.A.29) family.

It is found in the mitochondrion inner membrane. It carries out the reaction citrate(in) + H(+)(in) = citrate(out) + H(+)(out). Its function is as follows. Mitochondrial transporter that mediates citrate export from mitochondria to cytoplasm. Both ctpA, ctpB, and ctpD play important roles in citric acid transport across the mitochondrial membrane and function in a redundant manner. This is Mitochondrial citrate transporter D from Aspergillus niger (strain ATCC 1015 / CBS 113.46 / FGSC A1144 / LSHB Ac4 / NCTC 3858a / NRRL 328 / USDA 3528.7).